Consider the following 87-residue polypeptide: Small ribosomal subunit protein bS20 (87 aa).

The disordered stretch occupies residues 1–28; sequence MANIKSQQKRNRTNERARLRNKSVKSSL.

Belongs to the bacterial ribosomal protein bS20 family.

Binds directly to 16S ribosomal RNA. The protein is Small ribosomal subunit protein bS20 of Mycobacterium marinum (strain ATCC BAA-535 / M).